The primary structure comprises 312 residues: Aspartate carbamoyltransferase catalytic subunit (312 aa).

2 residues coordinate carbamoyl phosphate: Arg-58 and Thr-59. Lys-86 contributes to the L-aspartate binding site. Carbamoyl phosphate contacts are provided by Arg-108, His-136, and Gln-139. Positions 169 and 223 each coordinate L-aspartate. Gly-264 and Pro-265 together coordinate carbamoyl phosphate.

Belongs to the aspartate/ornithine carbamoyltransferase superfamily. ATCase family. In terms of assembly, heterododecamer (2C3:3R2) of six catalytic PyrB chains organized as two trimers (C3), and six regulatory PyrI chains organized as three dimers (R2).

The enzyme catalyses carbamoyl phosphate + L-aspartate = N-carbamoyl-L-aspartate + phosphate + H(+). It participates in pyrimidine metabolism; UMP biosynthesis via de novo pathway; (S)-dihydroorotate from bicarbonate: step 2/3. Its function is as follows. Catalyzes the condensation of carbamoyl phosphate and aspartate to form carbamoyl aspartate and inorganic phosphate, the committed step in the de novo pyrimidine nucleotide biosynthesis pathway. The polypeptide is Aspartate carbamoyltransferase catalytic subunit (Desulforamulus reducens (strain ATCC BAA-1160 / DSM 100696 / MI-1) (Desulfotomaculum reducens)).